The primary structure comprises 446 residues: Tol-Pal system protein TolB (446 aa).

Residues Met1–Ala43 form the signal peptide.

It belongs to the TolB family. The Tol-Pal system is composed of five core proteins: the inner membrane proteins TolA, TolQ and TolR, the periplasmic protein TolB and the outer membrane protein Pal. They form a network linking the inner and outer membranes and the peptidoglycan layer.

The protein localises to the periplasm. Part of the Tol-Pal system, which plays a role in outer membrane invagination during cell division and is important for maintaining outer membrane integrity. The protein is Tol-Pal system protein TolB of Cupriavidus metallidurans (strain ATCC 43123 / DSM 2839 / NBRC 102507 / CH34) (Ralstonia metallidurans).